Here is a 573-residue protein sequence, read N- to C-terminus: Sulfate adenylyltransferase (573 aa).

The segment at 1–169 (MANPPHGGIL…VEAVNKLNHY (169 aa)) is N-terminal. A catalytic region spans residues 170–394 (DYVGLRFTPA…LRESNPPRSK (225 aa)). Sulfate is bound at residue glutamine 197. ATP is bound by residues 197–200 (QTRN) and 291–294 (GRDH). Active-site residues include threonine 198, arginine 199, and asparagine 200. Arginine 199 provides a ligand contact to sulfate. Alanine 295 is a sulfate binding site. Leucine 333 is an ATP binding site. The segment at 395 to 573 (QGFTVFLTGY…LESQGFLEKA (179 aa)) is allosteric regulation domain; adenylyl-sulfate kinase-like. 3'-phosphoadenylyl sulfate-binding positions include 434–437 (DTVR), arginine 451, 477–478 (IA), and arginine 515.

This sequence in the N-terminal section; belongs to the sulfate adenylyltransferase family. It in the C-terminal section; belongs to the APS kinase family. Homohexamer. Dimer of trimers.

It localises to the cytoplasm. The enzyme catalyses sulfate + ATP + H(+) = adenosine 5'-phosphosulfate + diphosphate. It functions in the pathway sulfur metabolism; hydrogen sulfide biosynthesis; sulfite from sulfate: step 1/3. With respect to regulation, allosterically inhibited by 3'-phosphoadenosine 5'-phosphosulfate (PAPS). Functionally, catalyzes the first intracellular reaction of sulfate assimilation, forming adenosine-5'-phosphosulfate (APS) from inorganic sulfate and ATP. Plays an important role in sulfate activation as a component of the biosynthesis pathway of sulfur-containing amino acids. The chain is Sulfate adenylyltransferase from Coccidioides immitis (strain RS) (Valley fever fungus).